A 1055-amino-acid polypeptide reads, in one-letter code: Kinesin-like protein KIN-7D, mitochondrial (1055 aa).

A compositionally biased stretch (low complexity) spans 1-23 (MASSSSRTRSSRPPSPASSTSSS). The segment at 1-36 (MASSSSRTRSSRPPSPASSTSSSHLSNRLIPRSNST) is disordered. The transit peptide at 1 to 96 (MASSSSRTRS…PMDDTISSER (96 aa)) directs the protein to the mitochondrion. Residues 98–415 (SISVTVRFRP…LKFASRAKSI (318 aa)) enclose the Kinesin motor domain. An ATP-binding site is contributed by 178 to 185 (GVTSSGKT). Coiled coils occupy residues 419–503 (ASRN…ILVS), 618–653 (PENS…GEAS), and 694–823 (LQEK…LAQT). The segment at 826 to 856 (PMNGVNRKYNDGARSGRKGRISSSRSSGDEF) is disordered. Residues 880 to 911 (LESALAEKEFIEDEYRKKAEEAKRREEALEND) adopt a coiled-coil conformation. The segment at 926 to 963 (NGALPEPNGTDPGRELEKSQSHAVLKERQVSSAPRQPE) is disordered. Residues 937 to 954 (PGRELEKSQSHAVLKERQ) are compositionally biased toward basic and acidic residues. The segment at 1008-1043 (CKVCFESPTAAILLPCRHFCLCKSCSLACSECPICR) adopts an RING-type zinc-finger fold.

This sequence belongs to the TRAFAC class myosin-kinesin ATPase superfamily. Kinesin family. KIN-7 subfamily.

The protein localises to the mitochondrion. This Arabidopsis thaliana (Mouse-ear cress) protein is Kinesin-like protein KIN-7D, mitochondrial.